Consider the following 517-residue polypeptide: Facilitated trehalose transporter Tret1 (517 aa).

The Cytoplasmic segment spans residues 1–56 (MWIEIPECYEVLRNVFSKFRRHSLTAAMVKLLMRADTHVSFTVPAEEPVAKCTFSQ). The chain crosses the membrane as a helical span at residues 57-77 (VLAALSVSLGSMVVGFSSAYT). The Extracellular portion of the chain corresponds to 78-100 (SPALVSMKDRNITSFEVTDQSGS). N-linked (GlcNAc...) asparagine glycosylation is present at asparagine 88. Residues 101-121 (WVGGIMPLAGLVGGILGGPLI) traverse the membrane as a helical segment. Over 122-135 (EYLGRKNTILATAT) the chain is Cytoplasmic. A helical membrane pass occupies residues 136–156 (PFIISWLLIACATHVAMVLVG). At 157–158 (RA) the chain is on the extracellular side. Residues 159–179 (LSGFSVGVASLSLPVYLGETV) form a helical membrane-spanning segment. At 180 to 184 (QPEVR) the chain is on the cytoplasmic side. A helical membrane pass occupies residues 185–205 (GTLGLLPTAFGNIGILLCFVA). The Extracellular portion of the chain corresponds to 206–212 (GNYMDWS). A helical membrane pass occupies residues 213 to 233 (ELAFLGATLPVPFLILMFLIP). Topologically, residues 234–296 (ETPRWYVSRG…DLLKKTNLKP (63 aa)) are cytoplasmic. Residues 297–317 (LLISLGLMFFQQLSGINAVIF) form a helical membrane-spanning segment. At 318–333 (YTVQIFQDAGSTIDEN) the chain is on the extracellular side. Residues 334-354 (LCTIIVGVVNFIATFIATLLI) form a helical membrane-spanning segment. The Cytoplasmic portion of the chain corresponds to 355-360 (DRLGRK). The helical transmembrane segment at 361–381 (MLLYISDIAMIITLMTLGGFF) threads the bilayer. Residues 382-392 (YVKNNGGDVSH) lie on the Extracellular side of the membrane. The helical transmembrane segment at 393-413 (IGWLPLASFVIFVLGFSLGFG) threads the bilayer. The Cytoplasmic segment spans residues 414–437 (PIPWLMMGEILPGKIRGSAASVAT). Residues 438 to 458 (AFNWSCTFVVTKTFADIIASI) traverse the membrane as a helical segment. The Extracellular portion of the chain corresponds to 459-461 (GTH). Residues 462–482 (GAFWMFGSVCVVGLVFVIMYV) form a helical membrane-spanning segment. Residues 483–517 (PETQGKSLEDIERKMCGRVRRMSSVANIKPLSFNM) lie on the Cytoplasmic side of the membrane.

It belongs to the major facilitator superfamily. Sugar transporter (TC 2.A.1.1) family. Trehalose transporter subfamily.

It localises to the cell membrane. Functionally, high-capacity facilitative transporter for trehalose. Does not transport maltose, sucrose or lactose. Mediates the bidirectional transfer of trehalose. Responsible for the transport of trehalose synthesized in the fat body and the incorporation of trehalose into other tissues that require a carbon source, thereby regulating trehalose levels in the hemolymph. The polypeptide is Facilitated trehalose transporter Tret1 (Culex quinquefasciatus (Southern house mosquito)).